Here is a 431-residue protein sequence, read N- to C-terminus: Histidinol dehydrogenase (431 aa).

NAD(+) contacts are provided by tyrosine 127, glutamine 189, and asparagine 212. Residues serine 237, glutamine 259, and histidine 262 each coordinate substrate. Zn(2+)-binding residues include glutamine 259 and histidine 262. Active-site proton acceptor residues include glutamate 326 and histidine 327. Histidine 327, aspartate 360, glutamate 414, and histidine 419 together coordinate substrate. Aspartate 360 provides a ligand contact to Zn(2+). Position 419 (histidine 419) interacts with Zn(2+).

It belongs to the histidinol dehydrogenase family. It depends on Zn(2+) as a cofactor.

The catalysed reaction is L-histidinol + 2 NAD(+) + H2O = L-histidine + 2 NADH + 3 H(+). Its pathway is amino-acid biosynthesis; L-histidine biosynthesis; L-histidine from 5-phospho-alpha-D-ribose 1-diphosphate: step 9/9. Its function is as follows. Catalyzes the sequential NAD-dependent oxidations of L-histidinol to L-histidinaldehyde and then to L-histidine. The chain is Histidinol dehydrogenase from Xylella fastidiosa (strain Temecula1 / ATCC 700964).